The primary structure comprises 253 residues: Transcription factor bHLH106 (253 aa).

The bHLH domain maps to Ala-66–Leu-115.

As to quaternary structure, homodimer.

Its subcellular location is the nucleus. This is Transcription factor bHLH106 (BHLH106) from Arabidopsis thaliana (Mouse-ear cress).